Reading from the N-terminus, the 308-residue chain is Phosphate transport system permease protein PstA 1 (308 aa).

6 helical membrane-spanning segments follow: residues 36–56, 96–116, 132–152, 155–175, 204–224, and 276–296; these read FFFT…WVVI, AGVA…YLVE, VLAG…WIAT, FQQS…PVVV, IVRI…LLSI, and WGAA…AAMI. Residues 89–297 enclose the ABC transmembrane type-1 domain; the sequence is LYGTLVQAGV…TINLAAAMIR (209 aa).

It belongs to the binding-protein-dependent transport system permease family. CysTW subfamily. As to quaternary structure, the complex is composed of two ATP-binding proteins (PstB), two transmembrane proteins (PstC and PstA) and a solute-binding protein (PstS).

It localises to the cell membrane. In terms of biological role, part of the binding-protein-dependent transport system for phosphate; probably responsible for the translocation of the substrate across the membrane. This Mycobacterium tuberculosis (strain ATCC 25618 / H37Rv) protein is Phosphate transport system permease protein PstA 1 (pstA1).